The primary structure comprises 504 residues: Protein psiD (504 aa).

The signal sequence occupies residues 1–21 (MKYSYLLLILLLSNLYKEGFS). 6 N-linked (GlcNAc...) asparagine glycosylation sites follow: asparagine 87, asparagine 136, asparagine 236, asparagine 252, asparagine 290, and asparagine 373. One can recognise a PA14 domain in the interval 111–251 (LTRVGDSTYA…YDACGVCDGH (141 aa)). Over residues 417-430 (TVTPTVTPTVTPTP) the composition is skewed to low complexity. The tract at residues 417-453 (TVTPTVTPTVTPTPTTTPTPSPTTVPPRPTPTPLPAD) is disordered. The segment covering 431-453 (TTTPTPSPTTVPPRPTPTPLPAD) has biased composition (pro residues). A glycan (N-linked (GlcNAc...) asparagine) is linked at asparagine 483.

This sequence belongs to the prespore-cell-inducing factor family.

It localises to the secreted. This chain is Protein psiD (psiD), found in Dictyostelium discoideum (Social amoeba).